Consider the following 279-residue polypeptide: Ribosomal RNA small subunit methyltransferase A (279 aa).

S-adenosyl-L-methionine-binding residues include histidine 10, leucine 12, glycine 37, glutamate 58, aspartate 83, and asparagine 108.

This sequence belongs to the class I-like SAM-binding methyltransferase superfamily. rRNA adenine N(6)-methyltransferase family. RsmA subfamily.

The protein localises to the cytoplasm. The enzyme catalyses adenosine(1518)/adenosine(1519) in 16S rRNA + 4 S-adenosyl-L-methionine = N(6)-dimethyladenosine(1518)/N(6)-dimethyladenosine(1519) in 16S rRNA + 4 S-adenosyl-L-homocysteine + 4 H(+). Its function is as follows. Specifically dimethylates two adjacent adenosines (A1518 and A1519) in the loop of a conserved hairpin near the 3'-end of 16S rRNA in the 30S particle. May play a critical role in biogenesis of 30S subunits. This is Ribosomal RNA small subunit methyltransferase A from Synechococcus elongatus (strain ATCC 33912 / PCC 7942 / FACHB-805) (Anacystis nidulans R2).